The sequence spans 231 residues: Large ribosomal subunit protein uL1 (231 aa).

It belongs to the universal ribosomal protein uL1 family. In terms of assembly, part of the 50S ribosomal subunit.

Binds directly to 23S rRNA. The L1 stalk is quite mobile in the ribosome, and is involved in E site tRNA release. Its function is as follows. Protein L1 is also a translational repressor protein, it controls the translation of the L11 operon by binding to its mRNA. This is Large ribosomal subunit protein uL1 from Staphylococcus carnosus (strain TM300).